Consider the following 108-residue polypeptide: Large ribosomal subunit protein bL31B (108 aa).

Residues 81–108 (KPAQPVQAPAEEGPVVKGKKKAPAKKKK) form a disordered region. The span at 97–108 (KGKKKAPAKKKK) shows a compositional bias: basic residues.

It belongs to the bacterial ribosomal protein bL31 family. Type B subfamily. Part of the 50S ribosomal subunit.

This is Large ribosomal subunit protein bL31B from Chlamydia caviae (strain ATCC VR-813 / DSM 19441 / 03DC25 / GPIC) (Chlamydophila caviae).